Here is a 111-residue protein sequence, read N- to C-terminus: Ribonuclease P protein component (111 aa).

Belongs to the RnpA family. As to quaternary structure, consists of a catalytic RNA component (M1 or rnpB) and a protein subunit.

It carries out the reaction Endonucleolytic cleavage of RNA, removing 5'-extranucleotides from tRNA precursor.. Its function is as follows. RNaseP catalyzes the removal of the 5'-leader sequence from pre-tRNA to produce the mature 5'-terminus. It can also cleave other RNA substrates such as 4.5S RNA. The protein component plays an auxiliary but essential role in vivo by binding to the 5'-leader sequence and broadening the substrate specificity of the ribozyme. The sequence is that of Ribonuclease P protein component from Borrelia garinii subsp. bavariensis (strain ATCC BAA-2496 / DSM 23469 / PBi) (Borreliella bavariensis).